The primary structure comprises 145 residues: MMINIRRSRHEEGEKLIAIWRRSVDATHDFLSNAYRAELEELVSDFLPEAPLWVAVTDQDEPVGFMLLTGEHMDALFIDPDVRGQGIGKMLVEHALTLAPGLTTNVNEQNTQAVGFYKKMGFKVTGRSEVDDLGKPYPLLNLIYP.

Positions 3-144 (INIRRSRHEE…KPYPLLNLIY (142 aa)) constitute an N-acetyltransferase domain.

The protein belongs to the acetyltransferase family.

The enzyme catalyses L-lysyl-[protein] + acetyl-CoA = N(6)-acetyl-L-lysyl-[protein] + CoA + H(+). Functionally, N-epsilon-lysine acetyltransferase that catalyzes acetylation of a large number of proteins. In Salmonella typhimurium (strain LT2 / SGSC1412 / ATCC 700720), this protein is Peptidyl-lysine N-acetyltransferase YjaB (yjaB).